The chain runs to 46 residues: Viscotoxin-C1 (46 aa).

Intrachain disulfides connect C3–C40, C4–C32, and C16–C26.

As to quaternary structure, monomer.

Its subcellular location is the secreted. Functionally, thionins are small plant proteins which are toxic to animal cells. They seem to exert their toxic effect at the level of the cell membrane. Their precise function is not known. The chain is Viscotoxin-C1 from Viscum album (European mistletoe).